The following is a 102-amino-acid chain: MTITLAHYLILGAILFAIGIFGIFLNRRNLIILLMSIELMLLAVNMNFVAFSSWFGDTAGQVFVFFILTVAAAEAAIGLAILVLLFRNLNTINVDDLDRLKG.

Helical transmembrane passes span L5 to L25, I31 to F51, and V62 to L82.

It belongs to the complex I subunit 4L family. In terms of assembly, NDH-1 is composed of 14 different subunits. Subunits NuoA, H, J, K, L, M, N constitute the membrane sector of the complex.

The protein resides in the cell inner membrane. The catalysed reaction is a quinone + NADH + 5 H(+)(in) = a quinol + NAD(+) + 4 H(+)(out). In terms of biological role, NDH-1 shuttles electrons from NADH, via FMN and iron-sulfur (Fe-S) centers, to quinones in the respiratory chain. The immediate electron acceptor for the enzyme in this species is believed to be ubiquinone. Couples the redox reaction to proton translocation (for every two electrons transferred, four hydrogen ions are translocated across the cytoplasmic membrane), and thus conserves the redox energy in a proton gradient. This Bordetella avium (strain 197N) protein is NADH-quinone oxidoreductase subunit K.